The following is a 116-amino-acid chain: Iron-sulfur cluster insertion protein ErpA (116 aa).

Iron-sulfur cluster contacts are provided by cysteine 44, cysteine 108, and cysteine 110.

Belongs to the HesB/IscA family. Homodimer. Iron-sulfur cluster serves as cofactor.

Required for insertion of 4Fe-4S clusters for at least IspG. In Pseudomonas entomophila (strain L48), this protein is Iron-sulfur cluster insertion protein ErpA.